The following is a 680-amino-acid chain: MKHLLTLALCFSSINAVAVTVPHKAVGTGIPEGSLQFLSLRASAPIGSAISRNNWAVTCDSAQSGNECNKAIDGNKDTFWHTFYGANGDPKPPHTYTIDMKTTQNVNGLSMLPRQDGNQNGWIGRHEVYLSSDGTNWGSPVASGSWFADSTTKYSNFETRPARYVRLVAITEANGQPWTSIAEINVFQASSYTAPQPGLGRWGPTIDLPIVPAAAAIEPTSGRVLMWSSYRNDAFGGSPGGITLTSSWDPSTGIVSDRTVTVTKHDMFCPGISMDGNGQIVVTGGNDAKKTSLYDSSSDSWIPGPDMQVARGYQSSATMSDGRVFTIGGSWSGGVFEKNGEVYSPSSKTWTSLPNAKVNPMLTADKQGLYRSDNHAWLFGWKKGSVFQAGPSTAMNWYYTSGSGDVKSAGKRQSNRGVAPDAMCGNAVMYDAVKGKILTFGGSPDYQDSDATTNAHIITLGEPGTSPNTVFASNGLYFARTFHTSVVLPDGSTFITGGQRRGIPFEDSTPVFTPEIYVPEQDTFYKQNPNSIVRVYHSISLLLPDGRVFNGGGGLCGDCTTNHFDAQIFTPNYLYNSNGNLATRPKITRTSTQSVKVGGRITISTDSSISKASLIRYGTATHTVNTDQRRIPLTLTNNGGNSYSFQVPSDSGVALPGYWMLFVMNSAGVPSVASTIRVTQ.

The N-terminal stretch at 1–24 (MKHLLTLALCFSSINAVAVTVPHK) is a signal peptide. Positions 25–41 (AVGTGIPEGSLQFLSLR) are excised as a propeptide. The F5/8 type C domain maps to 42–189 (ASAPIGSAIS…SIAEINVFQA (148 aa)). A disulfide bridge connects residues cysteine 59 and cysteine 68. Kelch repeat units follow at residues 223-268 (RVLM…HDMF), 279-321 (QIVV…TMSD), 323-372 (RVFT…LYRS), 436-490 (KILT…VLPD), and 492-544 (STFI…LLLP). The 3'-(S-cysteinyl)-tyrosine (Cys-Tyr) cross-link spans 269 to 313 (CPGISMDGNGQIVVTGGNDAKKTSLYDSSSDSWIPGPDMQVARGY). Tyrosine 313 provides a ligand contact to Cu cation. Cu cation is bound by residues tyrosine 536 and histidine 537. Tyrosine 536 acts as the Proton acceptor in catalysis. Cysteine 556 and cysteine 559 are disulfide-bonded. Histidine 622 provides a ligand contact to Cu cation.

Monomer. It depends on Cu(2+) as a cofactor. Galactose oxidase contains a protein-derived free radical cofactor. In the active state, Tyr-313, which is cross-linked to Cys-269 via a thioether bond, is oxidized to a radical and acts with Cu(2+) as a two-electron acceptor in the oxidation reaction. The cross-link is believed to modulate the redox potential of the tyrosyl radical, which is further stabilized by a stacking interaction with Trp-331 in the active site. The post-translational formation of the cross-link is closely linked to the propeptide cleavage event, and both are copper-dependent, autocatalytic processes. The propeptide may act as an intramolecular chaperone, facilitating thioester bond formation and copper binding by positioning of active-site residues, including copper ligands.

The protein localises to the secreted. It catalyses the reaction D-galactose + O2 = D-galacto-hexodialdose + H2O2. Inhibited by diethyldithiocarbamate. Catalyzes the sterospecific oxidation of primary alcohols to the corresponding aldehydes. The biologically relevant substrate of the enzyme is not known as the enzyme exhibits broad substrate specificity from small alcohols through sugars to oligo- and polysaccharides. In Gibberella zeae (Wheat head blight fungus), this protein is Galactose oxidase (GAOA).